The sequence spans 337 residues: Biotin synthase (337 aa).

A Radical SAM core domain is found at E58–R283. C73, C77, and C80 together coordinate [4Fe-4S] cluster. Residues C116, C149, C208, and R278 each coordinate [2Fe-2S] cluster.

The protein belongs to the radical SAM superfamily. Biotin synthase family. In terms of assembly, homodimer. [4Fe-4S] cluster serves as cofactor. It depends on [2Fe-2S] cluster as a cofactor.

The enzyme catalyses (4R,5S)-dethiobiotin + (sulfur carrier)-SH + 2 reduced [2Fe-2S]-[ferredoxin] + 2 S-adenosyl-L-methionine = (sulfur carrier)-H + biotin + 2 5'-deoxyadenosine + 2 L-methionine + 2 oxidized [2Fe-2S]-[ferredoxin]. It functions in the pathway cofactor biosynthesis; biotin biosynthesis; biotin from 7,8-diaminononanoate: step 2/2. Catalyzes the conversion of dethiobiotin (DTB) to biotin by the insertion of a sulfur atom into dethiobiotin via a radical-based mechanism. The chain is Biotin synthase from Pseudarthrobacter chlorophenolicus (strain ATCC 700700 / DSM 12829 / CIP 107037 / JCM 12360 / KCTC 9906 / NCIMB 13794 / A6) (Arthrobacter chlorophenolicus).